The following is a 196-amino-acid chain: Nucleoside triphosphate pyrophosphatase (196 aa).

Asp73 functions as the Proton acceptor in the catalytic mechanism.

It belongs to the Maf family. A divalent metal cation serves as cofactor.

The protein localises to the cytoplasm. It catalyses the reaction a ribonucleoside 5'-triphosphate + H2O = a ribonucleoside 5'-phosphate + diphosphate + H(+). The enzyme catalyses a 2'-deoxyribonucleoside 5'-triphosphate + H2O = a 2'-deoxyribonucleoside 5'-phosphate + diphosphate + H(+). Functionally, nucleoside triphosphate pyrophosphatase. May have a dual role in cell division arrest and in preventing the incorporation of modified nucleotides into cellular nucleic acids. The protein is Nucleoside triphosphate pyrophosphatase of Chlamydia pneumoniae (Chlamydophila pneumoniae).